Consider the following 231-residue polypeptide: Claudin-10 (231 aa).

The chain crosses the membrane as a helical span at residues 1 to 21; it reads MASTALEIVAFVVSISGWVLV. Over 22–80 the chain is Extracellular; it reads SSTLPTDYWKVSTIDGTVITTATYFANLWKICVTDSTGVANCKEFPSMLALDGYIQACR. Residues 81–101 traverse the membrane as a helical segment; that stretch reads GLMIAAVSLGFFGSIFALFGM. Over 102 to 115 the chain is Cytoplasmic; sequence KCTKVGGSDQAKAK. A helical membrane pass occupies residues 116 to 136; the sequence is IACLAGIVFILSGLCSMTGCS. Residues 137–160 are Extracellular-facing; sequence LYANKITTEFFDPLYMEQKYELGA. Residues 161–181 traverse the membrane as a helical segment; the sequence is ALFIGWAGASLCIIGGVIFCF. At 182–231 the chain is on the cytoplasmic side; that stretch reads SISDNNKTPRMGYTYNGPTSAMSSRTKYQGGEGDFKTTGPSKQFDKNAYV.

It belongs to the claudin family. As to quaternary structure, can form homodimers both in trans (interaction between CLDN10 molecules in opposing membranes) and in cis (interaction between CLDN10 molecules within one membrane). Interacts with CLDN19. As to expression, widely expressed, with highest expression detected in brain cortex, kidney and lung. In kidney, the expression is highest in medulla, with transcripts being detected in medullary thick ascending limb of Henle's loop (mTAL) and outer and inner medullary collecting ducts. Expressed in salivary glands and skin. In terms of tissue distribution, detected in kidney with transcripts being detected in PCT, mTAL and cortical collecting duct. Detected in uterus. Expressed in proximal tubules (at protein level). Only detected in kidney and uterus. As to expression, detected in kidney with transcripts being detected in PCT, mTAL and cortical collecting duct. Detected in uterus. In terms of tissue distribution, expressed in the inner ear where it is detected in organ of Corti, marginal cells of stria vascularis, Reissner's membrane and spiral limbus (at protein level).

It localises to the cell junction. Its subcellular location is the tight junction. The protein resides in the cell membrane. It is found in the endoplasmic reticulum. The enzyme catalyses Na(+)(in) = Na(+)(out). The catalysed reaction is Li(+)(in) = Li(+)(out). It carries out the reaction K(+)(in) = K(+)(out). It catalyses the reaction Rb(+)(in) = Rb(+)(out). The enzyme catalyses Cs(+)(in) = Cs(+)(out). The catalysed reaction is NH4(+)(in) = NH4(+)(out). It carries out the reaction methylamine(out) = methylamine(in). It catalyses the reaction Mg(2+)(in) = Mg(2+)(out). The enzyme catalyses Ca(2+)(in) = Ca(2+)(out). The catalysed reaction is Sr(2+)(in) = Sr(2+)(out). It carries out the reaction chloride(in) = chloride(out). It catalyses the reaction nitrate(in) = nitrate(out). In terms of biological role, forms paracellular channels: polymerizes in tight junction strands with cation- and anion-selective channels through the strands, conveying epithelial permeability in a process known as paracellular tight junction permeability. Functionally, forms cation-selective paracellular channels. In sweat glands and in the thick ascending limb (TAL) of Henle's loop in kidney, it controls paracellular sodium permeability which is essential for proper sweat production and renal function. Its function is as follows. Forms anion-selective paracellular channels. In renal proximal tubules, it conveys selective chloride over hydrogencarbonate anion permeability which is required for renal chloride reabsorption and salt homeostasis. This is Claudin-10 from Mus musculus (Mouse).